The sequence spans 307 residues: D-alanine--D-alanine ligase (307 aa).

The region spanning 108–301 (KEVFAAAGLP…FPEFCAWMVE (194 aa)) is the ATP-grasp domain. An ATP-binding site is contributed by 135-185 (LPPPYVVKPNCEGSSVGVYIVQADANGPPRLAPDMPRDLMVETYIPGRELT). Mg(2+)-binding residues include D252, E268, and N270.

Belongs to the D-alanine--D-alanine ligase family. Requires Mg(2+) as cofactor. The cofactor is Mn(2+).

The protein resides in the cytoplasm. The enzyme catalyses 2 D-alanine + ATP = D-alanyl-D-alanine + ADP + phosphate + H(+). The protein operates within cell wall biogenesis; peptidoglycan biosynthesis. Cell wall formation. The polypeptide is D-alanine--D-alanine ligase (Cereibacter sphaeroides (strain ATCC 17025 / ATH 2.4.3) (Rhodobacter sphaeroides)).